Reading from the N-terminus, the 113-residue chain is Large ribosomal subunit protein bL19 (113 aa).

This sequence belongs to the bacterial ribosomal protein bL19 family.

Functionally, this protein is located at the 30S-50S ribosomal subunit interface and may play a role in the structure and function of the aminoacyl-tRNA binding site. In Corynebacterium glutamicum (strain R), this protein is Large ribosomal subunit protein bL19.